The sequence spans 211 residues: Germin-like protein subfamily 3 member 3 (211 aa).

The first 20 residues, 1-20 (MKMIIQIFFIISLISTISFA), serve as a signal peptide directing secretion. Cys-26 and Cys-41 are disulfide-bonded. Residues 55–201 (TGLGTAGNTS…TTFLSDAEVK (147 aa)) enclose the Cupin type-1 domain. A glycan (N-linked (GlcNAc...) asparagine) is linked at Asn-62. Positions 103, 105, and 110 each coordinate Mn(2+). Ser-140 is subject to Phosphoserine. His-149 lines the Mn(2+) pocket.

This sequence belongs to the germin family. In terms of assembly, oligomer (believed to be a pentamer but probably hexamer). As to expression, expressed in leaves and flowers.

It localises to the secreted. The protein localises to the extracellular space. It is found in the apoplast. May play a role in plant defense. Probably has no oxalate oxidase activity even if the active site is conserved. The protein is Germin-like protein subfamily 3 member 3 (GER3) of Arabidopsis thaliana (Mouse-ear cress).